The sequence spans 355 residues: Chorismate synthase (355 aa).

Arg48 lines the NADP(+) pocket. FMN is bound by residues 125 to 127 (RSS), 239 to 240 (NA), Gly280, 295 to 299 (KPVAT), and Arg321.

It belongs to the chorismate synthase family. In terms of assembly, homotetramer. It depends on FMNH2 as a cofactor.

It carries out the reaction 5-O-(1-carboxyvinyl)-3-phosphoshikimate = chorismate + phosphate. The protein operates within metabolic intermediate biosynthesis; chorismate biosynthesis; chorismate from D-erythrose 4-phosphate and phosphoenolpyruvate: step 7/7. Its function is as follows. Catalyzes the anti-1,4-elimination of the C-3 phosphate and the C-6 proR hydrogen from 5-enolpyruvylshikimate-3-phosphate (EPSP) to yield chorismate, which is the branch point compound that serves as the starting substrate for the three terminal pathways of aromatic amino acid biosynthesis. This reaction introduces a second double bond into the aromatic ring system. This chain is Chorismate synthase, found in Flavobacterium psychrophilum (strain ATCC 49511 / DSM 21280 / CIP 103535 / JIP02/86).